The sequence spans 395 residues: S-adenosylmethionine synthase (395 aa).

H18 serves as a coordination point for ATP. Residue D20 participates in Mg(2+) binding. Residue E46 participates in K(+) binding. E59 and Q103 together coordinate L-methionine. Positions 103-113 (QSVDIAVGVDA) are flexible loop. ATP-binding positions include 170–172 (DAK), 235–236 (KF), D244, 250–251 (RK), A267, and K271. D244 serves as a coordination point for L-methionine. Residue K275 coordinates L-methionine.

Belongs to the AdoMet synthase family. Homotetramer; dimer of dimers. It depends on Mg(2+) as a cofactor. The cofactor is K(+).

Its subcellular location is the cytoplasm. It carries out the reaction L-methionine + ATP + H2O = S-adenosyl-L-methionine + phosphate + diphosphate. It participates in amino-acid biosynthesis; S-adenosyl-L-methionine biosynthesis; S-adenosyl-L-methionine from L-methionine: step 1/1. In terms of biological role, catalyzes the formation of S-adenosylmethionine (AdoMet) from methionine and ATP. The overall synthetic reaction is composed of two sequential steps, AdoMet formation and the subsequent tripolyphosphate hydrolysis which occurs prior to release of AdoMet from the enzyme. This chain is S-adenosylmethionine synthase, found in Acidiphilium cryptum (strain JF-5).